Reading from the N-terminus, the 444-residue chain is Glutamate-1-semialdehyde 2,1-aminomutase (444 aa).

Lysine 267 is modified (N6-(pyridoxal phosphate)lysine).

Belongs to the class-III pyridoxal-phosphate-dependent aminotransferase family. HemL subfamily. In terms of assembly, homodimer. The cofactor is pyridoxal 5'-phosphate.

It localises to the cytoplasm. The enzyme catalyses (S)-4-amino-5-oxopentanoate = 5-aminolevulinate. It participates in porphyrin-containing compound metabolism; protoporphyrin-IX biosynthesis; 5-aminolevulinate from L-glutamyl-tRNA(Glu): step 2/2. The sequence is that of Glutamate-1-semialdehyde 2,1-aminomutase from Xylella fastidiosa (strain Temecula1 / ATCC 700964).